The following is a 368-amino-acid chain: Phosphate acyltransferase (368 aa).

The protein belongs to the PlsX family. In terms of assembly, homodimer. Probably interacts with PlsY.

Its subcellular location is the cytoplasm. It catalyses the reaction a fatty acyl-[ACP] + phosphate = an acyl phosphate + holo-[ACP]. Its pathway is lipid metabolism; phospholipid metabolism. Catalyzes the reversible formation of acyl-phosphate (acyl-PO(4)) from acyl-[acyl-carrier-protein] (acyl-ACP). This enzyme utilizes acyl-ACP as fatty acyl donor, but not acyl-CoA. The sequence is that of Phosphate acyltransferase from Herpetosiphon aurantiacus (strain ATCC 23779 / DSM 785 / 114-95).